The chain runs to 670 residues: Outer dynein arm-docking complex subunit 1 (670 aa).

3 coiled-coil regions span residues 9 to 155 (SKEV…RYLN), 183 to 224 (AVRE…EQLH), and 302 to 381 (NFIN…IQLL). Residues 454–473 (KMAPLQPPDTLEDPPGFEAS) are disordered. S517 carries the post-translational modification Phosphoserine. Disordered stretches follow at residues 526–596 (AGSS…ASSG) and 616–670 (VGSS…DSRG). Positions 584–596 (GHVTFGSTSASSG) are enriched in polar residues. Positions 650 to 670 (SSTGPASSTGPGSSTSKDSRG) are enriched in low complexity.

The protein belongs to the ODA1/DCC2 family. In terms of assembly, component of the outer dynein arm-docking complex along with ODAD2, ODAD3, ODAD4 and CLXN. Interacts with ODAD3. Interacts with ODAD4; this interaction may facilitate the recruitment and/or attachment of outer dynein arm docking complex proteins, including ODAD1, ODAD3, and ODAD4 to ciliary axonemes. Interacts with DNAH9. Interacts with MNS1. Interacts with PIERCE1 and PIERCE2; the interactions link the outer dynein arms docking complex (ODA-DC) to the internal microtubule inner proteins (MIP) in cilium axoneme. As to expression, expressed in nasal epithelial cells. Highly expressed in testis and also detected in lung, brain and kidney.

Its subcellular location is the cytoplasm. It localises to the cytoskeleton. The protein localises to the cilium axoneme. Its function is as follows. Component of the outer dynein arm-docking complex (ODA-DC) that mediates outer dynein arms (ODA) binding onto the doublet microtubule. Involved in mediating assembly of both ODAs and their axonemal docking complex onto ciliary microtubules. This Homo sapiens (Human) protein is Outer dynein arm-docking complex subunit 1.